We begin with the raw amino-acid sequence, 69 residues long: Putative membrane protein insertion efficiency factor (69 aa).

This sequence belongs to the UPF0161 family.

Its subcellular location is the cell inner membrane. Its function is as follows. Could be involved in insertion of integral membrane proteins into the membrane. This is Putative membrane protein insertion efficiency factor from Dechloromonas aromatica (strain RCB).